The following is a 190-amino-acid chain: Mediator of RNA polymerase II transcription subunit 28 (190 aa).

Residues Met-76 to Ala-108 adopt a coiled-coil conformation.

Belongs to the Mediator complex subunit 28 family. Component of the Mediator complex.

The protein resides in the nucleus. Functionally, component of the Mediator complex, a coactivator involved in the regulated transcription of nearly all RNA polymerase II-dependent genes. Mediator functions as a bridge to convey information from gene-specific regulatory proteins to the basal RNA polymerase II transcription machinery. Mediator is recruited to promoters by direct interactions with regulatory proteins and serves as a scaffold for the assembly of a functional preinitiation complex with RNA polymerase II and the general transcription factors. This is Mediator of RNA polymerase II transcription subunit 28 (MED28) from Drosophila pseudoobscura pseudoobscura (Fruit fly).